The primary structure comprises 322 residues: uncharacterized protein (322 aa).

2 stretches are compositionally biased toward basic residues: residues 1 to 16 and 43 to 61; these read MPGNSRRRGAVRKSGT and LRPHHPAAKRARAQPRRPV. Positions 1 to 69 are disordered; it reads MPGNSRRRGA…PVKRADETET (69 aa). S-adenosyl-L-methionine contacts are provided by glycine 261, isoleucine 281, and leucine 290.

The protein belongs to the class IV-like SAM-binding methyltransferase superfamily. RNA methyltransferase TrmH family.

This is an uncharacterized protein from Mycobacterium tuberculosis (strain CDC 1551 / Oshkosh).